Consider the following 1284-residue polypeptide: MHKKRVEEGEASDFSLAWDSSVTAAGGLEGEPECDQKTSRALEDRNSVTSQEERNEDDEDMEDESIYTCDHCQQDFESLADLTDHRAHRCPGDGDDDPQLSWVASSPSSKDVASPTQMIGDGCDLGLGEEEGGTGLPYPCQFCDKSFIRLSYLKRHEQIHSDKLPFKCTYCSRLFKHKRSRDRHIKLHTGDKKYHCHECEAAFSRSDHLKIHLKTHSSSKPFKCTVCKRGFSSTSSLQSHMQAHKKNKEHLAKSEKEAKKDDFMCDYCEDTFSQTEELEKHVLTRHPQLSEKADLQCIHCPEVFVDENTLLAHIHQAHANQKHKCPMCPEQFSSVEGVYCHLDSHRQPDSSNHSVSPDPVLGSVASMSSATPDSSASVERGSTPDSTLKPLRGQKKMRDDGQGWTKVVYSCPYCSKRDFNSLAVLEIHLKTIHADKPQQSHTCQICLDSMPTLYNLNEHVRKLHKNHAYPVMQFGNISAFHCNYCPEMFADINSLQEHIRVSHCGPNANPSDGNNAFFCNQCSMGFLTESSLTEHIQQAHCSVGSAKLESPVVQPTQSFMEVYSCPYCTNSPIFGSILKLTKHIKENHKNIPLAHSKKSKAEQSPVSSDVEVSSPKRQRLSASANSISNGEYPCNQCDLKFSNFESFQTHLKLHLELLLRKQACPQCKEDFDSQESLLQHLTVHYMTTSTHYVCESCDKQFSSVDDLQKHLLDMHTFVLYHCTLCQEVFDSKVSIQVHLAVKHSNEKKMYRCTACNWDFRKEADLQVHVKHSHLGNPAKAHKCIFCGETFSTEVELQCHITTHSKKYNCKFCSKAFHAIILLEKHLREKHCVFDAATENGTANGVPPMATKKAEPADLQGMLLKNPEAPNSHEASEDDVDASEPMYGCDICGAAYTMEVLLQNHRLRDHNIRPGEDDGSRKKAEFIKGSHKCNVCSRTFFSENGLREHLQTHRGPAKHYMCPICGERFPSLLTLTEHKVTHSKSLDTGTCRICKMPLQSEEEFIEHCQMHPDLRNSLTGFRCVVCMQTVTSTLELKIHGTFHMQKLAGSSAASSPNGQGLQKLYKCALCLKEFRSKQDLVKLDVNGLPYGLCAGCMARSANGQVGGLAPPEPADRPCAGLRCPECSVKFESAEDLESHMQVDHRDLTPETSGPRKGTQTSPVPRKKTYQCIKCQMTFENEREIQIHVANHMIEEGINHECKLCNQMFDSPAKLLCHLIEHSFEGMGGTFKCPVCFTVFVQANKLQQHIFAVHGQEDKIYDCSQCPQKFFFQTELQNHTMSQHAQ.

Disordered stretches follow at residues 1–64 and 87–117; these read MHKK…MEDE and AHRCPGDGDDDPQLSWVASSPSSKDVASPTQ. Positions 34–46 are enriched in basic and acidic residues; it reads CDQKTSRALEDRN. Ser-47 and Ser-50 each carry phosphoserine. The segment covering 54–64 has biased composition (acidic residues); it reads RNEDDEDMEDE. The C2H2-type 1; degenerate zinc-finger motif lies at 67-93; that stretch reads YTCDHCQQDFESLADLTDHRAHRCPGD. Over residues 102–117 the composition is skewed to polar residues; that stretch reads WVASSPSSKDVASPTQ. 7 C2H2-type zinc fingers span residues 138 to 160, 166 to 188, 194 to 216, 222 to 244, 263 to 286, 295 to 318, and 323 to 345; these read YPCQFCDKSFIRLSYLKRHEQIH, FKCTYCSRLFKHKRSRDRHIKLH, YHCHECEAAFSRSDHLKIHLKTH, FKCTVCKRGFSSTSSLQSHMQAH, FMCDYCEDTFSQTEELEKHVLTRH, LQCIHCPEVFVDENTLLAHIHQAH, and HKCPMCPEQFSSVEGVYCHLDSH. The segment at 346-398 is disordered; the sequence is RQPDSSNHSVSPDPVLGSVASMSSATPDSSASVERGSTPDSTLKPLRGQKKMR. Positions 363 to 377 are enriched in low complexity; the sequence is SVASMSSATPDSSAS. The C2H2-type 9; degenerate zinc-finger motif lies at 409 to 433; sequence YSCPYCSKRDFNSLAVLEIHLKTIH. C2H2-type zinc fingers lie at residues 441–464, 480–503, and 517–540; these read HTCQICLDSMPTLYNLNEHVRKLH, FHCNYCPEMFADINSLQEHIRVSH, and FFCNQCSMGFLTESSLTEHIQQAH. Residues 563–588 form a C2H2-type 13; atypical zinc finger; that stretch reads YSCPYCTNSPIFGSILKLTKHIKENH. The disordered stretch occupies residues 590-624; that stretch reads NIPLAHSKKSKAEQSPVSSDVEVSSPKRQRLSASA. Ser-604 carries the post-translational modification Phosphoserine. Over residues 604–615 the composition is skewed to low complexity; that stretch reads SPVSSDVEVSSP. 7 consecutive C2H2-type zinc fingers follow at residues 632–654, 662–684, 692–715, 720–743, 750–773, 781–803, and 807–830; these read YPCNQCDLKFSNFESFQTHLKLH, QACPQCKEDFDSQESLLQHLTVH, YVCESCDKQFSSVDDLQKHLLDMH, YHCTLCQEVFDSKVSIQVHLAVKH, YRCTACNWDFRKEADLQVHVKHSH, HKCIFCGETFSTEVELQCHITTH, and YNCKFCSKAFHAIILLEKHLREKH. Residues 886 to 908 form a C2H2-type 21; degenerate zinc finger; that stretch reads YGCDICGAAYTMEVLLQNHRLRD. C2H2-type zinc fingers lie at residues 930–952, 959–981, and 1020–1042; these read HKCNVCSRTFFSENGLREHLQTH, YMCPICGERFPSLLTLTEHKVTH, and FRCVVCMQTVTSTLELKIHGTFH. Residue Ser-1054 is modified to Phosphoserine. A C2H2-type 25; degenerate zinc finger spans residues 1064–1082; the sequence is YKCALCLKEFRSKQDLVKL. 5 consecutive C2H2-type zinc fingers follow at residues 1120-1143, 1168-1190, 1198-1220, 1229-1252, and 1259-1282; these read LRCPECSVKFESAEDLESHMQVDH, YQCIKCQMTFENEREIQIHVANH, HECKLCNQMFDSPAKLLCHLIEH, FKCPVCFTVFVQANKLQQHIFAVH, and YDCSQCPQKFFFQTELQNHTMSQH. Residues 1136–1147 show a composition bias toward basic and acidic residues; the sequence is ESHMQVDHRDLT. Residues 1136 to 1163 form a disordered region; that stretch reads ESHMQVDHRDLTPETSGPRKGTQTSPVP.

This sequence belongs to the krueppel C2H2-type zinc-finger protein family. Homodimer. Interacts with EBF1. Interacts with SMAD1 and SMAD4. Interacts with PARP1. Interacts with CEP290. As to expression, expressed in brain, lung, skeletal muscle, heart, pancreas and kidney but not liver or placenta. Also expressed in aorta, ovary, pituitary, small intestine, fetal brain, fetal kidney and, within the adult brain, in the substantia nigra, medulla, amygdala, thalamus and cerebellum.

It localises to the nucleus. Transcription factor that can both act as an activator or a repressor depending on the context. Plays a central role in BMP signaling and olfactory neurogenesis. Associates with SMADs in response to BMP2 leading to activate transcription of BMP target genes. Acts as a transcriptional repressor via its interaction with EBF1, a transcription factor involved in terminal olfactory receptor neurons differentiation; this interaction preventing EBF1 to bind DNA and activate olfactory-specific genes. Involved in olfactory neurogenesis by participating in a developmental switch that regulates the transition from differentiation to maturation in olfactory receptor neurons. Controls proliferation and differentiation of neural precursors in cerebellar vermis formation. In Homo sapiens (Human), this protein is Zinc finger protein 423 (ZNF423).